Consider the following 769-residue polypeptide: Wall-associated receptor kinase-like 10 (769 aa).

The signal sequence occupies residues 1–24 (MSSNCSCSLLSLFSLLLIIDLTVA). Over 25–358 (SSCPKTCGGI…YTCEYTNHRP (334 aa)) the chain is Extracellular. N58, N114, N134, N182, N187, N237, N262, and N296 each carry an N-linked (GlcNAc...) asparagine glycan. The tract at residues 291-351 (CLCDYNSTTT…CVNLLGGYTC (61 aa)) is atypical EGF-like. Cystine bridges form between C293–C305, C327–C342, and C337–C351. A helical transmembrane segment spans residues 359–379 (LVIGLSTSFSTLVFIGGIYWL). The Cytoplasmic portion of the chain corresponds to 380-769 (YKFIRRQRRL…RSDVEPLFPR (390 aa)). One can recognise a Protein kinase domain in the interval 433 to 718 (FSLTRILGEG…SYSEDMQPYE (286 aa)). ATP-binding positions include 439 to 447 (LGEGGQGTV) and K461. Phosphotyrosine is present on Y506. The Proton acceptor role is filled by D559. Residues T593 and T598 each carry the phosphothreonine modification. Position 606 is a phosphotyrosine (Y606).

It belongs to the protein kinase superfamily. Ser/Thr protein kinase family.

The protein resides in the membrane. The enzyme catalyses L-seryl-[protein] + ATP = O-phospho-L-seryl-[protein] + ADP + H(+). It carries out the reaction L-threonyl-[protein] + ATP = O-phospho-L-threonyl-[protein] + ADP + H(+). In terms of biological role, serine/threonine-protein kinase that may function as a signaling receptor of extracellular matrix component. This chain is Wall-associated receptor kinase-like 10 (WAKL10), found in Arabidopsis thaliana (Mouse-ear cress).